Here is a 320-residue protein sequence, read N- to C-terminus: Cytochrome f (320 aa).

Residues 1–35 form the signal peptide; sequence MQTINTFSWINQRITRSISVLLLVYIITRTSISSA. Residues Tyr36, Cys56, Cys59, and His60 each contribute to the heme site. The chain crosses the membrane as a helical span at residues 286–306; it reads VQGLLFFLASVILAQIFLVLK.

This sequence belongs to the cytochrome f family. As to quaternary structure, the 4 large subunits of the cytochrome b6-f complex are cytochrome b6, subunit IV (17 kDa polypeptide, petD), cytochrome f and the Rieske protein, while the 4 small subunits are PetG, PetL, PetM and PetN. The complex functions as a dimer. Heme is required as a cofactor.

The protein localises to the plastid thylakoid membrane. Component of the cytochrome b6-f complex, which mediates electron transfer between photosystem II (PSII) and photosystem I (PSI), cyclic electron flow around PSI, and state transitions. The chain is Cytochrome f from Cuscuta exaltata (Tall dodder).